The sequence spans 404 residues: Glucose-1-phosphate adenylyltransferase (404 aa).

Residues Tyr-99, Gly-164, 179-180 (EK), and Ser-197 contribute to the alpha-D-glucose 1-phosphate site.

This sequence belongs to the bacterial/plant glucose-1-phosphate adenylyltransferase family. In terms of assembly, homotetramer.

It carries out the reaction alpha-D-glucose 1-phosphate + ATP + H(+) = ADP-alpha-D-glucose + diphosphate. It functions in the pathway glycan biosynthesis; glycogen biosynthesis. In terms of biological role, involved in the biosynthesis of ADP-glucose, a building block required for the elongation reactions to produce glycogen. Catalyzes the reaction between ATP and alpha-D-glucose 1-phosphate (G1P) to produce pyrophosphate and ADP-Glc. This is Glucose-1-phosphate adenylyltransferase from Rhodococcus jostii (strain RHA1).